Consider the following 224-residue polypeptide: V-type ATP synthase subunit D (224 aa).

Over residues 205–214 the composition is skewed to basic and acidic residues; the sequence is AKAKQQRKDI. Positions 205–224 are disordered; the sequence is AKAKQQRKDIQSGNHGSAAD. A compositionally biased stretch (polar residues) spans 215–224; the sequence is QSGNHGSAAD.

This sequence belongs to the V-ATPase D subunit family.

Functionally, produces ATP from ADP in the presence of a proton gradient across the membrane. This is V-type ATP synthase subunit D from Deinococcus deserti (strain DSM 17065 / CIP 109153 / LMG 22923 / VCD115).